The chain runs to 455 residues: Membrane protein Pbs54 (455 aa).

A helical transmembrane segment spans residues 12–32 (IISIIILILRISLFSCAEHLF). N41, N102, and N125 each carry an N-linked (GlcNAc...) asparagine glycan. 6 helical membrane passes run 181 to 201 (IFLI…LFNG), 220 to 240 (FIFF…LSCI), 244 to 264 (ILTF…FYLF), 285 to 305 (ILIG…IIFI), 312 to 332 (FLVK…IFFL), and 346 to 366 (FVFS…FWNI). The N-linked (GlcNAc...) asparagine glycan is linked to N373. Residues 398–418 (NMFALFMIFAMSILSIIFPRI) traverse the membrane as a helical segment.

It localises to the cell projection. The protein localises to the cilium. It is found in the flagellum. Its subcellular location is the cell membrane. In terms of biological role, plays a role in gamete fertilization. Required for the successful transmission of parasites to mosquito. This is Membrane protein Pbs54 from Plasmodium berghei (strain Anka).